Here is a 580-residue protein sequence, read N- to C-terminus: Tricyclene synthase TPS4, chloroplastic (580 aa).

Residues 1-41 (MLLNSSFISLPSFFKSQELGRTNLLIHRNGSPLLCYATNTN) constitute a chloroplast transit peptide. The (2E)-geranyl diphosphate site is built by Arg-296, Asp-334, Asp-338, Arg-475, and Asn-478. Mg(2+) is bound by residues Asp-334 and Asp-338. Positions 334–338 (DDIYD) match the DDXXD motif motif. 3 residues coordinate Mg(2+): Asn-478, Thr-482, and Glu-486.

The protein belongs to the terpene synthase family. Tpsb subfamily. Mg(2+) serves as cofactor. It depends on Mn(2+) as a cofactor. As to expression, expressed in leaves.

Its subcellular location is the plastid. The protein resides in the chloroplast stroma. The catalysed reaction is (2E)-geranyl diphosphate = tricyclene + diphosphate. It carries out the reaction (2E)-geranyl diphosphate = (E)-beta-ocimene + diphosphate. The protein operates within secondary metabolite biosynthesis; terpenoid biosynthesis. Promotes the emission of terpenes volatile organic compounds (VOC) in response to damage mediated by arthropod herbivores (e.g. Spodoptera exigua), probably to attract natural enemies of the herbivores. The chain is Tricyclene synthase TPS4, chloroplastic (TPS4) from Medicago truncatula (Barrel medic).